A 339-amino-acid chain; its full sequence is Ketol-acid reductoisomerase (NADP(+)) (339 aa).

In terms of domain architecture, KARI N-terminal Rossmann spans 1-182; sequence MRVYYDRDAD…GGGRAGIIET (182 aa). Residues 24 to 27, R48, S51, T53, and 83 to 86 contribute to the NADP(+) site; these read YGSQ and DELQ. H108 is an active-site residue. Residue G134 coordinates NADP(+). A KARI C-terminal knotted domain is found at 183–328; the sequence is TFREECETDL…AKLRAMMPWI (146 aa). Mg(2+) contacts are provided by D191, E195, E227, and E231. Residue S252 coordinates substrate.

The protein belongs to the ketol-acid reductoisomerase family. Mg(2+) serves as cofactor.

The catalysed reaction is (2R)-2,3-dihydroxy-3-methylbutanoate + NADP(+) = (2S)-2-acetolactate + NADPH + H(+). It catalyses the reaction (2R,3R)-2,3-dihydroxy-3-methylpentanoate + NADP(+) = (S)-2-ethyl-2-hydroxy-3-oxobutanoate + NADPH + H(+). The protein operates within amino-acid biosynthesis; L-isoleucine biosynthesis; L-isoleucine from 2-oxobutanoate: step 2/4. It functions in the pathway amino-acid biosynthesis; L-valine biosynthesis; L-valine from pyruvate: step 2/4. Involved in the biosynthesis of branched-chain amino acids (BCAA). Catalyzes an alkyl-migration followed by a ketol-acid reduction of (S)-2-acetolactate (S2AL) to yield (R)-2,3-dihydroxy-isovalerate. In the isomerase reaction, S2AL is rearranged via a Mg-dependent methyl migration to produce 3-hydroxy-3-methyl-2-ketobutyrate (HMKB). In the reductase reaction, this 2-ketoacid undergoes a metal-dependent reduction by NADPH to yield (R)-2,3-dihydroxy-isovalerate. The polypeptide is Ketol-acid reductoisomerase (NADP(+)) (Methylocella silvestris (strain DSM 15510 / CIP 108128 / LMG 27833 / NCIMB 13906 / BL2)).